The following is a 584-amino-acid chain: Protein DENND6A (584 aa).

The disordered stretch occupies residues 1–23; sequence MALWERGAGGAAEAGEDATEEPE. A uDENN domain is found at 39-218; the sequence is HCVCVVGFDL…KLRIPTYRDK (180 aa). The region spanning 244–369 is the cDENN domain; it reads EVDLFRCFCP…VKVKKLKNLK (126 aa). The dDENN domain occupies 371-504; that stretch reads LDSKPGVYTS…RSRQKEMTQN (134 aa).

The protein belongs to the DENND6 family.

Its subcellular location is the recycling endosome. It is found in the cytoplasm. Its function is as follows. Guanine nucleotide exchange factor (GEF) for RAB14. The protein is Protein DENND6A (DENND6A) of Gallus gallus (Chicken).